The chain runs to 622 residues: Meiotic expression up-regulated protein 25 (622 aa).

This chain is Meiotic expression up-regulated protein 25 (meu25), found in Schizosaccharomyces pombe (strain 972 / ATCC 24843) (Fission yeast).